The sequence spans 347 residues: RNA 3'-terminal phosphate cyclase (347 aa).

Residues Q101 and 286–289 each bind ATP; that span reads HMAD. H312 (tele-AMP-histidine intermediate) is an active-site residue.

This sequence belongs to the RNA 3'-terminal cyclase family. Type 1 subfamily.

Its subcellular location is the cytoplasm. It carries out the reaction a 3'-end 3'-phospho-ribonucleotide-RNA + ATP = a 3'-end 2',3'-cyclophospho-ribonucleotide-RNA + AMP + diphosphate. In terms of biological role, catalyzes the conversion of 3'-phosphate to a 2',3'-cyclic phosphodiester at the end of RNA. The mechanism of action of the enzyme occurs in 3 steps: (A) adenylation of the enzyme by ATP; (B) transfer of adenylate to an RNA-N3'P to produce RNA-N3'PP5'A; (C) and attack of the adjacent 2'-hydroxyl on the 3'-phosphorus in the diester linkage to produce the cyclic end product. The biological role of this enzyme is unknown but it is likely to function in some aspects of cellular RNA processing. This chain is RNA 3'-terminal phosphate cyclase, found in Pyrobaculum neutrophilum (strain DSM 2338 / JCM 9278 / NBRC 100436 / V24Sta) (Thermoproteus neutrophilus).